The sequence spans 428 residues: Cytochrome c biogenesis protein CcsB (428 aa).

Helical transmembrane passes span 14–34 (LKFA…GTFI), 72–92 (SLWF…CSFR), and 162–182 (IGPL…AYGS).

It belongs to the Ccs1/CcsB family. As to quaternary structure, may interact with CcsA.

The protein resides in the cellular thylakoid membrane. Functionally, required during biogenesis of c-type cytochromes (cytochrome c6 and cytochrome f) at the step of heme attachment. The protein is Cytochrome c biogenesis protein CcsB of Prochlorococcus marinus (strain MIT 9301).